The following is a 457-amino-acid chain: Aromatic amino acid permease FywP (457 aa).

The next 12 membrane-spanning stretches (helical) occupy residues Ile-16 to Val-36, Ser-43 to Gly-63, Phe-91 to Val-111, Phe-114 to Leu-134, Ala-154 to Ile-174, Gly-205 to Ile-225, Gly-243 to Leu-263, Ile-292 to Thr-312, Asn-342 to Gly-362, Ile-373 to Phe-393, Val-403 to Ile-423, and Thr-424 to Tyr-444.

This sequence belongs to the amino acid-polyamine-organocation (APC) superfamily. Amino acid transporter (AAT) (TC 2.A.3.1) family.

It is found in the cell membrane. Its function is as follows. Involved in phenylalanine and tyrosine uptake. Also has affinity for tryptophan. Plays no significant role in the excretion of accumulated phenylalanine. The sequence is that of Aromatic amino acid permease FywP from Lactococcus lactis subsp. cremoris (strain MG1363).